We begin with the raw amino-acid sequence, 635 residues long: Bifunctional lysine-specific demethylase and histidyl-hydroxylase NO66 (635 aa).

2 disordered regions span residues 1–115 and 141–190; these read MSAV…LQNS and FNGE…KANG. The span at 84 to 99 shows a compositional bias: low complexity; the sequence is ASASDINTSASKNVNA. The segment covering 141–156 has biased composition (polar residues); that stretch reads FNGESLKNNSNHSTPV. Residues 295–440 enclose the JmjC domain; sequence CSIRMLNPQT…DLLELFFPHA (146 aa). 3 residues coordinate Fe cation: histidine 341, aspartate 343, and histidine 406.

The protein belongs to the ROX family. NO66 subfamily. Requires Fe(2+) as cofactor.

The protein localises to the nucleus. It catalyses the reaction N(6),N(6)-dimethyl-L-lysyl(36)-[histone H3] + 2 2-oxoglutarate + 2 O2 = L-lysyl(36)-[histone H3] + 2 formaldehyde + 2 succinate + 2 CO2. Its function is as follows. Oxygenase that can act as both a histone lysine demethylase and a ribosomal histidine hydroxylase. Specifically demethylates 'Lys-4' (H3K4me) and 'Lys-36' (H3K36me) of histone H3, thereby playing a central role in histone code. The chain is Bifunctional lysine-specific demethylase and histidyl-hydroxylase NO66 from Aedes aegypti (Yellowfever mosquito).